We begin with the raw amino-acid sequence, 165 residues long: Crossover junction endodeoxyribonuclease RuvC (165 aa).

Active-site residues include D7, E68, and H142. Mg(2+) is bound by residues D7, E68, and H142.

The protein belongs to the RuvC family. In terms of assembly, homodimer which binds Holliday junction (HJ) DNA. The HJ becomes 2-fold symmetrical on binding to RuvC with unstacked arms; it has a different conformation from HJ DNA in complex with RuvA. In the full resolvosome a probable DNA-RuvA(4)-RuvB(12)-RuvC(2) complex forms which resolves the HJ. The cofactor is Mg(2+).

It localises to the cytoplasm. The catalysed reaction is Endonucleolytic cleavage at a junction such as a reciprocal single-stranded crossover between two homologous DNA duplexes (Holliday junction).. The RuvA-RuvB-RuvC complex processes Holliday junction (HJ) DNA during genetic recombination and DNA repair. Endonuclease that resolves HJ intermediates. Cleaves cruciform DNA by making single-stranded nicks across the HJ at symmetrical positions within the homologous arms, yielding a 5'-phosphate and a 3'-hydroxyl group; requires a central core of homology in the junction. The consensus cleavage sequence is 5'-(A/T)TT(C/G)-3'. Cleavage occurs on the 3'-side of the TT dinucleotide at the point of strand exchange. HJ branch migration catalyzed by RuvA-RuvB allows RuvC to scan DNA until it finds its consensus sequence, where it cleaves and resolves the cruciform DNA. This Anaplasma marginale (strain Florida) protein is Crossover junction endodeoxyribonuclease RuvC.